Here is an 83-residue protein sequence, read N- to C-terminus: MSESAKLDVSDYSFEKAVAELESIVARLERGDVALDESIAIYERGEALKKHCETLLSAAENRIEKIRLDRAGKPQGTEPLDGQ.

It belongs to the XseB family. As to quaternary structure, heterooligomer composed of large and small subunits.

Its subcellular location is the cytoplasm. It catalyses the reaction Exonucleolytic cleavage in either 5'- to 3'- or 3'- to 5'-direction to yield nucleoside 5'-phosphates.. Bidirectionally degrades single-stranded DNA into large acid-insoluble oligonucleotides, which are then degraded further into small acid-soluble oligonucleotides. The sequence is that of Exodeoxyribonuclease 7 small subunit from Rhizobium rhizogenes (strain K84 / ATCC BAA-868) (Agrobacterium radiobacter).